We begin with the raw amino-acid sequence, 328 residues long: Fructokinase-2 (328 aa).

It belongs to the carbohydrate kinase PfkB family.

The enzyme catalyses D-fructose + ATP = D-fructose 6-phosphate + ADP + H(+). The protein operates within glycan biosynthesis; starch biosynthesis. Functionally, may play an important role in maintaining the flux of carbon towards starch formation. This Solanum habrochaites (Wild tomato) protein is Fructokinase-2 (FRK2).